Here is a 510-residue protein sequence, read N- to C-terminus: Metalloprotease TIKI homolog (510 aa).

The first 30 residues, 1 to 30 (MQVKIVQVFPCLVLLVKLVLLSVLLPSATG), serve as a signal peptide directing secretion. The Extracellular portion of the chain corresponds to 31-489 (SYHCSNNATQ…FIPSASSGLR (459 aa)). 9 N-linked (GlcNAc...) asparagine glycosylation sites follow: asparagine 37, asparagine 98, asparagine 108, asparagine 141, asparagine 223, asparagine 281, asparagine 322, asparagine 383, and asparagine 417. The segment covering 435-471 (TSLNSATASTTVATPTSSVTPPTSSSSQTRSLTISDS) has biased composition (low complexity). Residues 435–477 (TSLNSATASTTVATPTSSVTPPTSSSSQTRSLTISDSQRTSDD) are disordered. The helical transmembrane segment at 490–510 (YNIGLVCVTLFFVLLIITSAL) threads the bilayer.

It belongs to the TIKI family. Mn(2+) serves as cofactor. The cofactor is Co(2+).

The protein localises to the membrane. Metalloprotease. This is Metalloprotease TIKI homolog from Amphimedon queenslandica (Sponge).